The sequence spans 488 residues: Cardiolipin synthase 2 (488 aa).

The next 2 helical transmembrane spans lie at Ile8–Ile28 and Ile39–Leu59. PLD phosphodiesterase domains lie at Met223–Tyr250 and Asp401–Ser428. Residues His228, Lys230, Asp235, His406, Lys408, and Asp413 contribute to the active site.

This sequence belongs to the phospholipase D family. Cardiolipin synthase subfamily.

The protein resides in the cell membrane. It catalyses the reaction 2 a 1,2-diacyl-sn-glycero-3-phospho-(1'-sn-glycerol) = a cardiolipin + glycerol. Its function is as follows. Catalyzes the reversible phosphatidyl group transfer from one phosphatidylglycerol molecule to another to form cardiolipin (CL) (diphosphatidylglycerol) and glycerol. The sequence is that of Cardiolipin synthase 2 (cls2) from Staphylococcus epidermidis (strain ATCC 35984 / DSM 28319 / BCRC 17069 / CCUG 31568 / BM 3577 / RP62A).